The following is a 27-amino-acid chain: Paragonial peptide PS-1 (27 aa).

Over residues 1 to 17 (DVPSANANANNQRTAAA) the composition is skewed to low complexity. The tract at residues 1 to 27 (DVPSANANANNQRTAAAKPQANAEASS) is disordered.

As to expression, main cells of the accessory glands of males (paragonial gland).

Its subcellular location is the secreted. Functionally, represses female sexual receptivity and stimulates oviposition. This peptide has a low activity. In Drosophila funebris (Fruit fly), this protein is Paragonial peptide PS-1 (PapC).